We begin with the raw amino-acid sequence, 54 residues long: Small polypeptide DEVIL 12 (54 aa).

The tract at residues 20–51 (NNKLTPNRSLKETRSRLYIIRRCLVMLLCWRE) is required for DVL/RTFL small polypeptide activity. The N-linked (GlcNAc...) asparagine glycan is linked to asparagine 26. Residues 31–48 (ETRSRLYIIRRCLVMLLC) form a helical membrane-spanning segment.

This sequence belongs to the DVL/RTFL small polypeptides family.

The protein localises to the cell membrane. Its function is as follows. Small polypeptide acting as a regulatory molecule which coordinates cellular responses required for differentiation, growth and development, probably by restricting polar cell proliferation in lateral organs and coordinating socket cell recruitment and differentiation at trichome sites. The sequence is that of Small polypeptide DEVIL 12 from Arabidopsis thaliana (Mouse-ear cress).